We begin with the raw amino-acid sequence, 260 residues long: Tropinone reductase homolog At2g29330 (260 aa).

13-37 (LVTGGASGIGHAIVEELAGFGAKIH) provides a ligand contact to NADP(+). Position 146 (S146) interacts with substrate. Y159 (proton acceptor) is an active-site residue.

This sequence belongs to the short-chain dehydrogenases/reductases (SDR) family. SDR65C subfamily.

Functionally, reductase active only on small flexible lipophilic carbonyls. No activity with cyclic monoterpenes, tropinone, nitrogen-containing tropinone analogs, tropine or pseudotropine as substrate. This is Tropinone reductase homolog At2g29330 from Arabidopsis thaliana (Mouse-ear cress).